A 287-amino-acid polypeptide reads, in one-letter code: Festuclavine synthase II (287 aa).

The protein belongs to the fgaFS/easG family.

The enzyme catalyses festuclavine + NAD(+) = 6,8-dimethyl-6,7-didehydroergoline + NADH + H(+). It functions in the pathway alkaloid biosynthesis; ergot alkaloid biosynthesis. In terms of biological role, festuclavine synthase; part of the gene cluster that mediates the biosynthesis of isofumigaclavines, fungal ergot alkaloids. The tryptophan dimethylallyltransferase ifgA catalyzes the first step of ergot alkaloid biosynthesis by condensing dimethylallyl diphosphate (DMAP) and tryptophan to form 4-dimethylallyl-L-tryptophan. The second step is catalyzed by the methyltransferase ifgB that methylates 4-dimethylallyl-L-tryptophan in the presence of S-adenosyl-L-methionine, resulting in the formation of N-methyl-dimethylallyl-L-tryptophan. The catalase ifgD and the FAD-dependent oxidoreductase ifgC then transform N-methyl-dimethylallyl-L-tryptophan to chanoclavine-I which is further oxidized by ifgE in the presence of NAD(+), resulting in the formation of chanoclavine-I aldehyde. The chanoclavine-I aldehyde reductases ifgG and/or fgaOx3 reduce chanoclavine-I aldehyde to dihydrochanoclavine-I aldehyde that spontaneously dehydrates to form 6,8-dimethyl-6,7-didehydroergoline. The festuclavine dehydrogenases ifgF1 and/or ifgF2 then catalyze the reduction of 6,8-dimethyl-6,7-didehydroergoline to form festuclavine. Hydrolysis of festuclavine by a yet undetermined cytochrome P450 monooxygenase (called ifgH) then leads to the formation of isofumigaclavine B which is in turn acetylated by ifgI to isofumigaclavine A. Penicillium roqueforti has interestingly at least two sets of genes for the consumption of chanoclavine-I aldehyde on three different loci, the OYEs ifgG/fgaOx3 and the festuclavine synthase homologs ifgF1/ifgF2. The reason for the duplication of these genes is unclear, probably to ensure the conversion of chanoclavine-I aldehyde by differential gene expression under various environmental conditions. The protein is Festuclavine synthase II of Penicillium roqueforti (strain FM164).